Consider the following 754-residue polypeptide: 5-methyltetrahydropteroyltriglutamate--homocysteine methyltransferase (754 aa).

5-methyltetrahydropteroyltri-L-glutamate-binding positions include 17–20 (RELK) and K117. Residues 431 to 433 (IGS) and E484 contribute to the L-homocysteine site. L-methionine is bound by residues 431–433 (IGS) and E484. 5-methyltetrahydropteroyltri-L-glutamate contacts are provided by residues 515–516 (RC) and W561. D599 contacts L-homocysteine. D599 serves as a coordination point for L-methionine. E605 lines the 5-methyltetrahydropteroyltri-L-glutamate pocket. Zn(2+) is bound by residues H641, C643, and E665. The active-site Proton donor is the H694. Residue C726 coordinates Zn(2+).

The protein belongs to the vitamin-B12 independent methionine synthase family. The cofactor is Zn(2+).

It carries out the reaction 5-methyltetrahydropteroyltri-L-glutamate + L-homocysteine = tetrahydropteroyltri-L-glutamate + L-methionine. It functions in the pathway amino-acid biosynthesis; L-methionine biosynthesis via de novo pathway; L-methionine from L-homocysteine (MetE route): step 1/1. Functionally, catalyzes the transfer of a methyl group from 5-methyltetrahydrofolate to homocysteine resulting in methionine formation. The polypeptide is 5-methyltetrahydropteroyltriglutamate--homocysteine methyltransferase (Salmonella choleraesuis (strain SC-B67)).